We begin with the raw amino-acid sequence, 141 residues long: Hemoglobin subunit alpha (141 aa).

The Globin domain occupies V1–R141. A Phosphoserine modification is found at S3. N6-succinyllysine occurs at positions 7 and 11. At K16 the chain carries N6-acetyllysine; alternate. N6-succinyllysine; alternate is present on K16. Y24 bears the Phosphotyrosine mark. A Phosphoserine modification is found at S35. K40 carries the post-translational modification N6-succinyllysine. At S49 the chain carries Phosphoserine. H58 contacts O2. A heme b-binding site is contributed by H87. A Phosphoserine modification is found at S102. Phosphothreonine is present on residues T108, T134, and T137. Residue S138 is modified to Phosphoserine.

This sequence belongs to the globin family. As to quaternary structure, heterotetramer of two alpha chains and two beta chains. In terms of tissue distribution, red blood cells.

In terms of biological role, involved in oxygen transport from the lung to the various peripheral tissues. Its function is as follows. Hemopressin acts as an antagonist peptide of the cannabinoid receptor CNR1. Hemopressin-binding efficiently blocks cannabinoid receptor CNR1 and subsequent signaling. The polypeptide is Hemoglobin subunit alpha (HBA) (Paguma larvata (Masked palm civet)).